The following is a 247-amino-acid chain: DNA-directed RNA polymerase subunit Rpo3 (247 aa).

This sequence belongs to the archaeal Rpo3/eukaryotic RPB3 RNA polymerase subunit family. Part of the RNA polymerase complex.

It is found in the cytoplasm. It catalyses the reaction RNA(n) + a ribonucleoside 5'-triphosphate = RNA(n+1) + diphosphate. Functionally, DNA-dependent RNA polymerase (RNAP) catalyzes the transcription of DNA into RNA using the four ribonucleoside triphosphates as substrates. This is DNA-directed RNA polymerase subunit Rpo3 from Natronomonas pharaonis (strain ATCC 35678 / DSM 2160 / CIP 103997 / JCM 8858 / NBRC 14720 / NCIMB 2260 / Gabara) (Halobacterium pharaonis).